We begin with the raw amino-acid sequence, 400 residues long: MIIKPKIRGFICTTTHPVGCEANVQEQITLTKAKGKIANGPKRVLVVGSSSGYGLSSRIAAAFGSDAATIGVFFEKPGTETKPGTAGWYNSAAFDKFAKAEGLYSKSINCDAFSHEAKQKVIELIKQDLGEIDMVVYSLASPVRKLPDSGELIRSALKPIGETYTATAVDTNKDCIIEATVEPATEQEIADTVTVMGGEDWELWIKALSEAGVLADNCKTVAYSYIGTELTWPIYWHGALGKAKMDLDRAAKALNEQLSATGGSANVAVLKSVVTQASSAIPVMPLYIAMVFKKMRQEGLHEGCMEQIYRMFSERLFRADGAKPETDSDNRIRLDDWELREDIQQHCRNLWPQVTTENLSELTDYREYKAEFIKLFGFGIEGIDYDADVNPYVEFDVIEL.

Residues 48–53, 74–75, 111–112, and 139–140 each bind NAD(+); these read GSSSGY, FE, DA, and LA. Residue tyrosine 225 participates in substrate binding. Tyrosine 235 functions as the Proton donor in the catalytic mechanism. Residues lysine 244 and 273 to 275 contribute to the NAD(+) site; that span reads VVT.

The protein belongs to the TER reductase family. In terms of assembly, monomer.

The catalysed reaction is a 2,3-saturated acyl-[ACP] + NAD(+) = a (2E)-enoyl-[ACP] + NADH + H(+). It participates in lipid metabolism; fatty acid biosynthesis. In terms of biological role, involved in the final reduction of the elongation cycle of fatty acid synthesis (FAS II). Catalyzes the reduction of a carbon-carbon double bond in an enoyl moiety that is covalently linked to an acyl carrier protein (ACP). The sequence is that of Enoyl-[acyl-carrier-protein] reductase [NADH] from Shewanella baltica (strain OS185).